A 367-amino-acid polypeptide reads, in one-letter code: Cycloaraneosene synthase sdnA (367 aa).

The N-terminal stretch at 1-24 (MSLYGLFTLATSYLPSVGGGAALA) is a signal peptide. Residues D115, N260, and S264 each contribute to the Mg(2+) site. The short motif at 115-119 (DDQFD) is the DDXXD motif element. N276 is a glycosylation site (N-linked (GlcNAc...) asparagine).

This sequence belongs to the terpene synthase family. It depends on Mg(2+) as a cofactor.

The enzyme catalyses (2E,6E,10E)-geranylgeranyl diphosphate = cycloaraneosene + diphosphate. The protein operates within antibiotic biosynthesis. Functionally, cycloaraneosene synthase; part of the gene cluster that mediates the biosynthesis of sordarin and hypoxysordarin, glycoside antibiotics with a unique tetracyclic diterpene aglycone structure. First, the geranylgeranyl diphosphate synthase sdnC constructs GGDP from farnesyl diphosphate and isopentenyl diphosphate. The diterpene cyclase sdnA then catalyzes the cyclization of GGDP to afford cycloaraneosene. Cycloaraneosene is then hydroxylated four times by the putative cytochrome P450 monooxygenases sdnB, sdnE, sdnF and sdnH to give a hydroxylated cycloaraneosene derivative such as cycloaraneosene-8,9,13,19-tetraol. Although the order of the hydroxylations is unclear, at least C8, C9 and C13 of the cycloaraneosene skeleton are hydroxylated before the sordaricin formation. Dehydration of the 13-hydroxy group of the hydroxylated cycloaraneosene derivative might be catalyzed by an unassigned hypothetical protein such as sdnG and sdnP to construct the cyclopentadiene moiety. The FAD-dependent oxidoreductase sdnN is proposed to catalyze the oxidation at C9 of the hydroxylated cycloaraneosene derivative and also catalyze the Baeyer-Villiger oxidation to give the lactone intermediate. The presumed lactone intermediate would be hydrolyzed to give an acrolein moiety and a carboxylate moiety. Then, [4+2]cycloaddition would occur between the acrolein moiety and the cyclopentadiene moiety to give sordaricin. SdnN might also be involved in the [4+2]cycloaddition after the hypothesized oxidation to accommodate the oxidized product and prompt the [4+2]cycloaddition. GDP-6-deoxy-D-altrose may be biosynthesized from GDP-D-mannose by the putative GDP-mannose-4,6-dehydratase sdnI and the short-chain dehydrogenase sdnK. The glycosyltransferase sdnJ catalyzes the attachment of 6-deoxy-D-altrose onto the 19-hydroxy group of sordaricin to give 4'-O-demethylsordarin. The methyltransferase sdnD would complete the biosynthesis of sordarin. Sordarin can be further modified into hypoxysordarin. The unique acyl chain at the 3'-hydroxy group of hypoxysordarin would be constructed by an iterative type I PKS sdnO and the trans-acting polyketide methyltransferase sdnL. SdnL would be responsible for the introduction of an alpha-methyl group of the polyketide chain. Alternatively, the beta-lactamase-like protein sdnR might be responsible for the cleavage and transfer of the polyketide chain from the PKS sdnO to sordarin. Two putative cytochrome P450 monooxygenases, sdnQ and sdnT, might catalyze the epoxidations of the polyketide chain to complete the biosynthesis of hypoxysordarin. Transcriptional regulators sdnM and sdnS are presumably encoded for the transcriptional regulation of the expression of the sdn gene cluster. The protein is Cycloaraneosene synthase sdnA of Sordaria araneosa (Pleurage araneosa).